The primary structure comprises 328 residues: Lytic polysaccharide monooxygenase aasB (328 aa).

An N-terminal signal peptide occupies residues 1–18 (MKAFFAISASTLLATVHG). Cu(2+) is bound at residue His19. Cys40 and Cys43 are oxidised to a cystine. N-linked (GlcNAc...) asparagine glycosylation occurs at Asn54. 6 disulfide bridges follow: Cys66/Cys245, Cys102/Cys203, Cys118/Cys145, Cys153/Cys161, Cys167/Cys173, and Cys181/Cys192. Position 109 (His109) interacts with Cu(2+). Position 242 (Tyr242) interacts with Cu(2+). The N-linked (GlcNAc...) asparagine glycan is linked to Asn306.

This sequence belongs to the polysaccharide monooxygenase AA13 family. It depends on Cu(2+) as a cofactor.

The protein localises to the secreted. It carries out the reaction starch + reduced acceptor + O2 = D-glucono-1,5-lactone-terminated malto-oligosaccharides + short-chain malto-oligosaccharides + acceptor + H2O.. In terms of biological role, lytic polysaccharide monooxygenase involved in breakdown of granular resistant starch. This chain is Lytic polysaccharide monooxygenase aasB, found in Emericella nidulans (strain FGSC A4 / ATCC 38163 / CBS 112.46 / NRRL 194 / M139) (Aspergillus nidulans).